Consider the following 211-residue polypeptide: FMN-dependent NADH:quinone oxidoreductase 2 (211 aa).

Residues Ser10 and 17 to 19 (SRS) contribute to the FMN site.

It belongs to the azoreductase type 1 family. Homodimer. FMN is required as a cofactor.

It catalyses the reaction 2 a quinone + NADH + H(+) = 2 a 1,4-benzosemiquinone + NAD(+). It carries out the reaction N,N-dimethyl-1,4-phenylenediamine + anthranilate + 2 NAD(+) = 2-(4-dimethylaminophenyl)diazenylbenzoate + 2 NADH + 2 H(+). In terms of biological role, quinone reductase that provides resistance to thiol-specific stress caused by electrophilic quinones. Its function is as follows. Also exhibits azoreductase activity. Catalyzes the reductive cleavage of the azo bond in aromatic azo compounds to the corresponding amines. This chain is FMN-dependent NADH:quinone oxidoreductase 2, found in Listeria monocytogenes serovar 1/2a (strain ATCC BAA-679 / EGD-e).